Consider the following 163-residue polypeptide: Antimicrobial peptide 2 (163 aa).

Residues M1–A22 form the signal peptide. Chitin-binding type-1 domains follow at residues N26–P66 and A69–P107. 3 disulfide bridges follow: C29/C42, C36/C48, and C41/C55. Residues N58 to T67 constitute a propeptide that is removed on maturation. Intrachain disulfides connect C72–C83, C77–C89, C82–C96, and C101–C105. Positions M100–P163 are excised as a propeptide.

Expressed in roots, flowers, stem and leaves.

Functionally, antimicrobial peptide. The chain is Antimicrobial peptide 2 from Stellaria media (Common chickweed).